The sequence spans 325 residues: Eukaryotic translation initiation factor 3 subunit I (325 aa).

WD repeat units follow at residues 8–47 (GHERSITQIKYNREGDLLFTVAKDPIVNVWYSVNGERLGT), 50–91 (GHTG…ALLK), 144–183 (CNDSKITSAVWGPLGECVIAGHESGELNQYSAKSGEVLVN), and 186–225 (EHSRQINDIQLSRDMTMFVTASKDNTAKLFDSTTLEHQKT). The residue at position 219 (threonine 219) is a Phosphothreonine. N6-acetyllysine is present on lysine 264. Lysine 282 participates in a covalent cross-link: Glycyl lysine isopeptide (Lys-Gly) (interchain with G-Cter in ubiquitin). The WD 5 repeat unit spans residues 283 to 324 (GHFGPINSVAFHPDGKSYSSGGEDGYVRIHYFDPQYFEFEFE). Tyrosine 308 carries the phosphotyrosine modification.

It belongs to the eIF-3 subunit I family. As to quaternary structure, component of the eukaryotic translation initiation factor 3 (eIF-3) complex, which is composed of 13 subunits: EIF3A, EIF3B, EIF3C, EIF3D, EIF3E, EIF3F, EIF3G, EIF3H, EIF3I, EIF3J, EIF3K, EIF3L and EIF3M. The eIF-3 complex appears to include 3 stable modules: module A is composed of EIF3A, EIF3B, EIF3G and EIF3I; module B is composed of EIF3F, EIF3H, and EIF3M; and module C is composed of EIF3C, EIF3D, EIF3E, EIF3K and EIF3L. EIF3C of module C binds EIF3B of module A and EIF3H of module B, thereby linking the three modules. EIF3J is a labile subunit that binds to the eIF-3 complex via EIF3B. The eIF-3 complex may interact with RPS6KB1 under conditions of nutrient depletion. Mitogenic stimulation may lead to binding and activation of a complex composed of MTOR and RPTOR, leading to phosphorylation and release of RPS6KB1 and binding of EIF4B to eIF-3. Post-translationally, phosphorylated by TGF-beta type II receptor.

The protein localises to the cytoplasm. Its function is as follows. Component of the eukaryotic translation initiation factor 3 (eIF-3) complex, which is required for several steps in the initiation of protein synthesis. The eIF-3 complex associates with the 40S ribosome and facilitates the recruitment of eIF-1, eIF-1A, eIF-2:GTP:methionyl-tRNAi and eIF-5 to form the 43S pre-initiation complex (43S PIC). The eIF-3 complex stimulates mRNA recruitment to the 43S PIC and scanning of the mRNA for AUG recognition. The eIF-3 complex is also required for disassembly and recycling of post-termination ribosomal complexes and subsequently prevents premature joining of the 40S and 60S ribosomal subunits prior to initiation. The eIF-3 complex specifically targets and initiates translation of a subset of mRNAs involved in cell proliferation, including cell cycling, differentiation and apoptosis, and uses different modes of RNA stem-loop binding to exert either translational activation or repression. In Mus musculus (Mouse), this protein is Eukaryotic translation initiation factor 3 subunit I (Eif3i).